A 51-amino-acid chain; its full sequence is Large ribosomal subunit protein eL39 (51 aa).

Belongs to the eukaryotic ribosomal protein eL39 family.

This is Large ribosomal subunit protein eL39 from Thermococcus onnurineus (strain NA1).